The primary structure comprises 305 residues: Coenzyme PQQ synthesis protein B (305 aa).

This sequence belongs to the PqqB family.

It functions in the pathway cofactor biosynthesis; pyrroloquinoline quinone biosynthesis. Its function is as follows. May be involved in the transport of PQQ or its precursor to the periplasm. This Methylobacillus flagellatus protein is Coenzyme PQQ synthesis protein B.